The following is a 327-amino-acid chain: Ribosomal RNA small subunit methyltransferase H (327 aa).

S-adenosyl-L-methionine is bound by residues 42–44 (GGH), D61, L95, D109, and Q116.

This sequence belongs to the methyltransferase superfamily. RsmH family.

It is found in the cytoplasm. The catalysed reaction is cytidine(1402) in 16S rRNA + S-adenosyl-L-methionine = N(4)-methylcytidine(1402) in 16S rRNA + S-adenosyl-L-homocysteine + H(+). In terms of biological role, specifically methylates the N4 position of cytidine in position 1402 (C1402) of 16S rRNA. This chain is Ribosomal RNA small subunit methyltransferase H, found in Desulfovibrio desulfuricans (strain ATCC 27774 / DSM 6949 / MB).